The primary structure comprises 204 residues: MECNLVNLSNDNVGTAQLNPLIFSAKQKLSILHDIVRWQLAKRRAGTHKTKGISDVSGTTAKPYGQKRTGRARQGSLRSPQFRGGGIIFGPVVRSHTYSLNKKVRKFGLKIALSLKYLNNQVIILDNLNIDVKKTSEMCKCIKNFKFSSFLIVGDYGDDLLRAAKNLHYVDLIKPIGLNVFDILNHECVMLTKDTLKHLEGRLL.

Residues 49–76 are disordered; sequence KTKGISDVSGTTAKPYGQKRTGRARQGS.

The protein belongs to the universal ribosomal protein uL4 family. In terms of assembly, part of the 50S ribosomal subunit.

One of the primary rRNA binding proteins, this protein initially binds near the 5'-end of the 23S rRNA. It is important during the early stages of 50S assembly. It makes multiple contacts with different domains of the 23S rRNA in the assembled 50S subunit and ribosome. Its function is as follows. Forms part of the polypeptide exit tunnel. This chain is Large ribosomal subunit protein uL4, found in Wolbachia sp. subsp. Drosophila simulans (strain wRi).